The primary structure comprises 360 residues: AA9 family lytic polysaccharide monooxygenase A (360 aa).

An N-terminal signal peptide occupies residues 1–19 (MKTSFGLLALAAAAKLVNA). Cu(2+)-binding residues include His-20 and His-102. Cys-62 and Cys-183 form a disulfide bridge. His-169 serves as a coordination point for O2. Cu(2+) is bound at residue Tyr-180. The disordered stretch occupies residues 254 to 293 (TSAASASSTKAPATTAAPVQTESAKPATSTTQAAAPTTLV). The CBM1 domain maps to 322 to 358 (GVVKMYAQCGGMNYSGSTTCESGLTCKQWNPYYHQCV). Asn-334 carries an N-linked (GlcNAc...) asparagine glycan.

The protein belongs to the polysaccharide monooxygenase AA9 family. The cofactor is Cu(2+).

Its subcellular location is the secreted. It carries out the reaction [(1-&gt;4)-beta-D-glucosyl]n+m + reduced acceptor + O2 = 4-dehydro-beta-D-glucosyl-[(1-&gt;4)-beta-D-glucosyl]n-1 + [(1-&gt;4)-beta-D-glucosyl]m + acceptor + H2O.. Its function is as follows. Lytic polysaccharide monooxygenase (LPMO) that depolymerizes crystalline and amorphous polysaccharides via the oxidation of scissile alpha- or beta-(1-4)-glycosidic bonds, yielding C4 oxidation products. Catalysis by LPMOs requires the reduction of the active-site copper from Cu(II) to Cu(I) by a reducing agent and H(2)O(2) or O(2) as a cosubstrate. The polypeptide is AA9 family lytic polysaccharide monooxygenase A (eglD) (Aspergillus terreus (strain NIH 2624 / FGSC A1156)).